We begin with the raw amino-acid sequence, 193 residues long: Lipid A acyltransferase PagP (193 aa).

A signal peptide spans 1–32 (MNGMAVVMIIRKYFLIIALLVMPWLAIPSVSA). Active-site residues include His65, Asp108, and Ser109.

The protein belongs to the lipid A palmitoyltransferase family. In terms of assembly, homodimer.

Its subcellular location is the cell outer membrane. The catalysed reaction is a lipid A + a 1,2-diacyl-sn-glycero-3-phosphocholine = a hepta-acyl lipid A + a 2-acyl-sn-glycero-3-phosphocholine. It carries out the reaction a lipid IVA + a 1,2-diacyl-sn-glycero-3-phosphocholine = a lipid IVB + a 2-acyl-sn-glycero-3-phosphocholine. The enzyme catalyses a lipid IIA + a 1,2-diacyl-sn-glycero-3-phosphocholine = a lipid IIB + a 2-acyl-sn-glycero-3-phosphocholine. Transfers a fatty acid residue from the sn-1 position of a phospholipid to the N-linked hydroxyfatty acid chain on the proximal unit of lipid A or its precursors. The chain is Lipid A acyltransferase PagP from Salmonella paratyphi C (strain RKS4594).